Here is a 42-residue protein sequence, read N- to C-terminus: Small, acid-soluble spore protein L (42 aa).

The disordered stretch occupies residues 1-42 (MKKKDKGRLTGGVTPQGDLEGNTHNDPKTELEERAKKSNTKR). The span at 21–36 (GNTHNDPKTELEERAK) shows a compositional bias: basic and acidic residues.

The protein resides in the spore core. The chain is Small, acid-soluble spore protein L (sspL) from Bacillus subtilis (strain 168).